The following is a 256-amino-acid chain: tRNA (guanine-N(7)-)-methyltransferase (256 aa).

The segment covering methionine 1–threonine 11 has biased composition (polar residues). The interval methionine 1 to arginine 35 is disordered. Residues glutamate 85, glutamate 110, aspartate 137, and aspartate 160 each contribute to the S-adenosyl-L-methionine site. Aspartate 160 is a catalytic residue. Position 164 (lysine 164) interacts with substrate. Residues arginine 166–arginine 171 are interaction with RNA. Residues aspartate 196 and threonine 234–glutamate 237 each bind substrate.

It belongs to the class I-like SAM-binding methyltransferase superfamily. TrmB family.

The catalysed reaction is guanosine(46) in tRNA + S-adenosyl-L-methionine = N(7)-methylguanosine(46) in tRNA + S-adenosyl-L-homocysteine. It functions in the pathway tRNA modification; N(7)-methylguanine-tRNA biosynthesis. Functionally, catalyzes the formation of N(7)-methylguanine at position 46 (m7G46) in tRNA. This chain is tRNA (guanine-N(7)-)-methyltransferase, found in Cupriavidus pinatubonensis (strain JMP 134 / LMG 1197) (Cupriavidus necator (strain JMP 134)).